The sequence spans 744 residues: Tripartite motif-containing protein 3 (744 aa).

A2 carries the N-acetylalanine modification. The interaction with KIF21B stretch occupies residues 2 to 290 (AKREDSPGPE…LAAQAFPERP (289 aa)). The residue at position 7 (S7) is a Phosphoserine. The RING-type zinc-finger motif lies at 22–63 (CSICLDRYRCPKVLPCLHTFCERCLQNYIPPQSLTLSCPVCR). The B box-type zinc-finger motif lies at 110–151 (GRPLSCPNHEGKTMEFYCEACETAMCGECRAGEHREHGTVLL). Residues C115, H118, C138, and H143 each contribute to the Zn(2+) site. A coiled-coil region spans residues 153 to 224 (DVVEQHKAAL…RKQALVSDLE (72 aa)). A Filamin repeat occupies 317–418 (TTSATAHETV…VRGSPFRVRA (102 aa)). Residues 419 to 464 (LRPGDLPPSPDDVKRRVKSPGGPGSHVRQKAVRRPSSMYSTGGKRK) form a disordered region. A Phosphoserine modification is found at S427. NHL repeat units follow at residues 473 to 516 (VFRV…FSNE), 520 to 563 (KFRF…FSPE), 564 to 605 (GKFK…FQPN), 609 to 652 (VGRF…YSAD), 656 to 699 (LFKF…FDSS), and 700 to 743 (GSFL…YRYL).

This sequence belongs to the TRIM/RBCC family. Forms homooligomers. Interacts with TRIM2; this interaction reduces TRIM2 activity. Associates with myosin-Vb (MYO5B) and alpha-actinin-4 (ACTN4). Component of the CART complex, at least composed of ACTN4, HGS/HRS, MYO5B and TRIM3. Interacts with ZFYVE28/LST2. Interacts with KIF21B.

The protein resides in the cytoplasm. The protein localises to the early endosome. It is found in the golgi apparatus. Its subcellular location is the trans-Golgi network. It localises to the cell projection. The protein resides in the dendrite. It catalyses the reaction S-ubiquitinyl-[E2 ubiquitin-conjugating enzyme]-L-cysteine + [acceptor protein]-L-lysine = [E2 ubiquitin-conjugating enzyme]-L-cysteine + N(6)-ubiquitinyl-[acceptor protein]-L-lysine.. In terms of biological role, E3 ubiquitin ligase that plays essential roles in neuronal functions such as regulation of neuronal plasticity, learning, and memory. In addition to its neuronal functions, participates in other biological processes such as innate immunity or cell cycle regulation. Component of the cytoskeleton-associated recycling or transport complex in neurons, polyubiquitinates gamma-actin, thus regulating neuronal plasticity, learning, and memory. Ubiquitinates postsynaptic scaffold GKAP, a neuronal substrate involved in synaptic remodeling and thereby modulates dendritic spine morphology. Positively regulates motility of microtubule-dependent motor protein KIF21B. Induces growth arrest via its RING-dependent E3 ligase activity and ubiquinates CDKN1A. Positively regulates TLR3-mediated signaling by mediating 'Lys-63'-linked polyubiquitination of TLR3. In turn, promotes the recognition and sorting of polyubiquitinated TLR3 by the ESCRT complexes. The polypeptide is Tripartite motif-containing protein 3 (Trim3) (Mus musculus (Mouse)).